Here is a 218-residue protein sequence, read N- to C-terminus: Ribose-5-phosphate isomerase A (218 aa).

Residues 27-30 (TGST), 80-83 (DGAD), and 93-96 (KGGG) each bind substrate. The active-site Proton acceptor is Glu-102. Lys-120 provides a ligand contact to substrate.

It belongs to the ribose 5-phosphate isomerase family. As to quaternary structure, homodimer.

It catalyses the reaction aldehydo-D-ribose 5-phosphate = D-ribulose 5-phosphate. It participates in carbohydrate degradation; pentose phosphate pathway; D-ribose 5-phosphate from D-ribulose 5-phosphate (non-oxidative stage): step 1/1. In terms of biological role, catalyzes the reversible conversion of ribose-5-phosphate to ribulose 5-phosphate. This Picrophilus torridus (strain ATCC 700027 / DSM 9790 / JCM 10055 / NBRC 100828 / KAW 2/3) protein is Ribose-5-phosphate isomerase A.